The following is a 241-amino-acid chain: Ribonuclease PH (241 aa).

Phosphate contacts are provided by residues R89 and G127–R129.

This sequence belongs to the RNase PH family. In terms of assembly, homohexameric ring arranged as a trimer of dimers.

The catalysed reaction is tRNA(n+1) + phosphate = tRNA(n) + a ribonucleoside 5'-diphosphate. Phosphorolytic 3'-5' exoribonuclease that plays an important role in tRNA 3'-end maturation. Removes nucleotide residues following the 3'-CCA terminus of tRNAs; can also add nucleotides to the ends of RNA molecules by using nucleoside diphosphates as substrates, but this may not be physiologically important. Probably plays a role in initiation of 16S rRNA degradation (leading to ribosome degradation) during starvation. The polypeptide is Ribonuclease PH (Stenotrophomonas maltophilia (strain K279a)).